A 78-amino-acid polypeptide reads, in one-letter code: Large ribosomal subunit protein bL28 (78 aa).

Residues 1–23 (MSRICQITGKKPLSGNKRSHSMN) form a disordered region.

The protein belongs to the bacterial ribosomal protein bL28 family.

The chain is Large ribosomal subunit protein bL28 from Wigglesworthia glossinidia brevipalpis.